Reading from the N-terminus, the 396-residue chain is Elongation factor Tu (396 aa).

One can recognise a tr-type G domain in the interval 11–205 (KPHVNIGTIG…TIDEYIPTPV (195 aa)). Positions 20-27 (GHVDHGKT) are G1. Position 20–27 (20–27 (GHVDHGKT)) interacts with GTP. Residue Thr-27 coordinates Mg(2+). The interval 61–65 (GITIN) is G2. The tract at residues 82 to 85 (DAPG) is G3. GTP-binding positions include 82–86 (DAPGH) and 137–140 (NKTD). The segment at 137–140 (NKTD) is G4. The G5 stretch occupies residues 175–177 (SAL).

The protein belongs to the TRAFAC class translation factor GTPase superfamily. Classic translation factor GTPase family. EF-Tu/EF-1A subfamily. As to quaternary structure, monomer.

The protein localises to the cytoplasm. It catalyses the reaction GTP + H2O = GDP + phosphate + H(+). In terms of biological role, GTP hydrolase that promotes the GTP-dependent binding of aminoacyl-tRNA to the A-site of ribosomes during protein biosynthesis. The chain is Elongation factor Tu from Lacticaseibacillus casei (strain BL23) (Lactobacillus casei).